The chain runs to 950 residues: Bifunctional glutamine synthetase adenylyltransferase/adenylyl-removing enzyme (950 aa).

The adenylyl removase stretch occupies residues 1 to 443; sequence MSLPSPLIPV…VFVTLIGDEE (443 aa). Positions 450 to 950 are adenylyl transferase; the sequence is ERHFNELWDM…WQEWLESSTI (501 aa).

This sequence belongs to the GlnE family. Requires Mg(2+) as cofactor.

It carries out the reaction [glutamine synthetase]-O(4)-(5'-adenylyl)-L-tyrosine + phosphate = [glutamine synthetase]-L-tyrosine + ADP. The enzyme catalyses [glutamine synthetase]-L-tyrosine + ATP = [glutamine synthetase]-O(4)-(5'-adenylyl)-L-tyrosine + diphosphate. In terms of biological role, involved in the regulation of glutamine synthetase GlnA, a key enzyme in the process to assimilate ammonia. When cellular nitrogen levels are high, the C-terminal adenylyl transferase (AT) inactivates GlnA by covalent transfer of an adenylyl group from ATP to specific tyrosine residue of GlnA, thus reducing its activity. Conversely, when nitrogen levels are low, the N-terminal adenylyl removase (AR) activates GlnA by removing the adenylyl group by phosphorolysis, increasing its activity. The regulatory region of GlnE binds the signal transduction protein PII (GlnB) which indicates the nitrogen status of the cell. The sequence is that of Bifunctional glutamine synthetase adenylyltransferase/adenylyl-removing enzyme from Vibrio vulnificus (strain CMCP6).